The primary structure comprises 209 residues: Large ribosomal subunit protein bL25 (209 aa).

The protein belongs to the bacterial ribosomal protein bL25 family. CTC subfamily. As to quaternary structure, part of the 50S ribosomal subunit; part of the 5S rRNA/L5/L18/L25 subcomplex. Contacts the 5S rRNA. Binds to the 5S rRNA independently of L5 and L18.

Functionally, this is one of the proteins that binds to the 5S RNA in the ribosome where it forms part of the central protuberance. This Chlorobium phaeobacteroides (strain BS1) protein is Large ribosomal subunit protein bL25.